Consider the following 427-residue polypeptide: Enolase (427 aa).

Residue Q163 coordinates (2R)-2-phosphoglycerate. The active-site Proton donor is the E205. Residues D242, E285, and D312 each contribute to the Mg(2+) site. (2R)-2-phosphoglycerate-binding residues include K337, R366, S367, and K388. The Proton acceptor role is filled by K337.

Belongs to the enolase family. Requires Mg(2+) as cofactor.

The protein resides in the cytoplasm. It is found in the secreted. The protein localises to the cell surface. It carries out the reaction (2R)-2-phosphoglycerate = phosphoenolpyruvate + H2O. It participates in carbohydrate degradation; glycolysis; pyruvate from D-glyceraldehyde 3-phosphate: step 4/5. Catalyzes the reversible conversion of 2-phosphoglycerate (2-PG) into phosphoenolpyruvate (PEP). It is essential for the degradation of carbohydrates via glycolysis. This Albidiferax ferrireducens (strain ATCC BAA-621 / DSM 15236 / T118) (Rhodoferax ferrireducens) protein is Enolase.